A 134-amino-acid chain; its full sequence is Cilia- and flagella-associated protein 144 (134 aa).

The tract at residues 76–95 is disordered; the sequence is QGPRKKYPETQTENQEVGWD.

Belongs to the CFAP144 family. Microtubule inner protein component of sperm flagellar doublet microtubules.

It is found in the cytoplasm. Its subcellular location is the cytoskeleton. The protein resides in the cilium axoneme. It localises to the flagellum axoneme. In terms of biological role, microtubule inner protein (MIP) part of the dynein-decorated doublet microtubules (DMTs) in cilia axoneme, which is required for motile cilia beating. In Homo sapiens (Human), this protein is Cilia- and flagella-associated protein 144.